The following is a 407-amino-acid chain: Phosphopentomutase (407 aa).

Mn(2+)-binding residues include Asp-10, Asp-306, His-311, Asp-347, His-348, and His-359.

This sequence belongs to the phosphopentomutase family. Mn(2+) serves as cofactor.

Its subcellular location is the cytoplasm. The enzyme catalyses 2-deoxy-alpha-D-ribose 1-phosphate = 2-deoxy-D-ribose 5-phosphate. It catalyses the reaction alpha-D-ribose 1-phosphate = D-ribose 5-phosphate. It participates in carbohydrate degradation; 2-deoxy-D-ribose 1-phosphate degradation; D-glyceraldehyde 3-phosphate and acetaldehyde from 2-deoxy-alpha-D-ribose 1-phosphate: step 1/2. Isomerase that catalyzes the conversion of deoxy-ribose 1-phosphate (dRib-1-P) and ribose 1-phosphate (Rib-1-P) to deoxy-ribose 5-phosphate (dRib-5-P) and ribose 5-phosphate (Rib-5-P), respectively. The sequence is that of Phosphopentomutase from Escherichia coli (strain UTI89 / UPEC).